Here is a 91-residue protein sequence, read N- to C-terminus: Small ribosomal subunit protein bS20 (91 aa).

This sequence belongs to the bacterial ribosomal protein bS20 family.

Its function is as follows. Binds directly to 16S ribosomal RNA. The chain is Small ribosomal subunit protein bS20 from Wolinella succinogenes (strain ATCC 29543 / DSM 1740 / CCUG 13145 / JCM 31913 / LMG 7466 / NCTC 11488 / FDC 602W) (Vibrio succinogenes).